A 406-amino-acid chain; its full sequence is Argininosuccinate synthase (406 aa).

ATP contacts are provided by residues 13–21 and alanine 40; that span reads AYSGGLDTS. Tyrosine 91 and serine 96 together coordinate L-citrulline. Position 121 (glycine 121) interacts with ATP. 3 residues coordinate L-aspartate: threonine 123, asparagine 127, and aspartate 128. Asparagine 127 is an L-citrulline binding site. Positions 131, 180, 189, 265, and 277 each coordinate L-citrulline.

Belongs to the argininosuccinate synthase family. Type 1 subfamily. As to quaternary structure, homotetramer.

The protein localises to the cytoplasm. It carries out the reaction L-citrulline + L-aspartate + ATP = 2-(N(omega)-L-arginino)succinate + AMP + diphosphate + H(+). Its pathway is amino-acid biosynthesis; L-arginine biosynthesis; L-arginine from L-ornithine and carbamoyl phosphate: step 2/3. This Syntrophotalea carbinolica (strain DSM 2380 / NBRC 103641 / GraBd1) (Pelobacter carbinolicus) protein is Argininosuccinate synthase.